The sequence spans 248 residues: 2,3-bisphosphoglycerate-dependent phosphoglycerate mutase (248 aa).

Substrate is bound by residues 8–15 (RHGESIWN), 21–22 (TG), R60, 87–90 (EKHY), K98, 114–115 (RR), and 183–184 (GN). H9 acts as the Tele-phosphohistidine intermediate in catalysis. The active-site Proton donor/acceptor is E87.

It belongs to the phosphoglycerate mutase family. BPG-dependent PGAM subfamily.

The enzyme catalyses (2R)-2-phosphoglycerate = (2R)-3-phosphoglycerate. The protein operates within carbohydrate degradation; glycolysis; pyruvate from D-glyceraldehyde 3-phosphate: step 3/5. Catalyzes the interconversion of 2-phosphoglycerate and 3-phosphoglycerate. The polypeptide is 2,3-bisphosphoglycerate-dependent phosphoglycerate mutase (Parabacteroides distasonis (strain ATCC 8503 / DSM 20701 / CIP 104284 / JCM 5825 / NCTC 11152)).